A 632-amino-acid polypeptide reads, in one-letter code: tRNA uridine 5-carboxymethylaminomethyl modification enzyme MnmG (632 aa).

FAD is bound by residues 15–20 (GAGHAG), I127, and S182. 276 to 290 (GPRYCPSIEDKIVRF) is a binding site for NAD(+). Position 373 (Q373) interacts with FAD.

Belongs to the MnmG family. In terms of assembly, homodimer. Heterotetramer of two MnmE and two MnmG subunits. The cofactor is FAD.

The protein resides in the cytoplasm. NAD-binding protein involved in the addition of a carboxymethylaminomethyl (cmnm) group at the wobble position (U34) of certain tRNAs, forming tRNA-cmnm(5)s(2)U34. The chain is tRNA uridine 5-carboxymethylaminomethyl modification enzyme MnmG from Streptococcus pyogenes serotype M28 (strain MGAS6180).